The following is a 351-amino-acid chain: Cell division protein FtsZ (351 aa).

Residues 31-35 (GAGNN), 118-120 (GTG), glutamate 149, arginine 153, and aspartate 197 contribute to the GTP site.

The protein belongs to the FtsZ family. As to quaternary structure, homodimer. Polymerizes to form a dynamic ring structure in a strictly GTP-dependent manner. Interacts directly with several other division proteins. Interacts with FtsA.

The protein resides in the cytoplasm. Functionally, essential cell division protein that forms a contractile ring structure (Z ring) at the future cell division site. The regulation of the ring assembly controls the timing and the location of cell division. One of the functions of the FtsZ ring is to recruit other cell division proteins to the septum to produce a new cell wall between the dividing cells. Binds GTP and shows GTPase activity. The chain is Cell division protein FtsZ from Thermotoga maritima (strain ATCC 43589 / DSM 3109 / JCM 10099 / NBRC 100826 / MSB8).